Consider the following 252-residue polypeptide: 2,5-diamino-6-ribosylamino-4(3H)-pyrimidinone 5'-phosphate reductase (252 aa).

NADP(+)-binding positions include T80, D84, V166, and G189–I193.

The protein belongs to the HTP reductase family. As to quaternary structure, homodimer.

The catalysed reaction is 2,5-diamino-6-(1-D-ribitylamino)pyrimidin-4(3H)-one 5'-phosphate + NADP(+) = 2,5-diamino-6-(1-D-ribosylamino)pyrimidin-4(3H)-one 5'-phosphate + NADPH + H(+). It carries out the reaction 2,5-diamino-6-(1-D-ribitylamino)pyrimidin-4(3H)-one 5'-phosphate + NAD(+) = 2,5-diamino-6-(1-D-ribosylamino)pyrimidin-4(3H)-one 5'-phosphate + NADH + H(+). Its pathway is cofactor biosynthesis; riboflavin biosynthesis. Functionally, catalyzes an early step in riboflavin biosynthesis, the NADPH-dependent reduction of the ribose side chain of 2,5-diamino-6-ribosylamino-4(3H)-pyrimidinone 5'-phosphate, yielding 2,5-diamino-6-ribitylamino-4(3H)-pyrimidinone 5'-phosphate. The polypeptide is 2,5-diamino-6-ribosylamino-4(3H)-pyrimidinone 5'-phosphate reductase (RIB7) (Kluyveromyces lactis (strain ATCC 8585 / CBS 2359 / DSM 70799 / NBRC 1267 / NRRL Y-1140 / WM37) (Yeast)).